The sequence spans 227 residues: Probable chorismate pyruvate-lyase (227 aa).

Substrate-binding residues include arginine 75, leucine 113, and glutamate 173. Residues 192-227 (SGDWSAHPRVREHGRPLEHTASRAHPATRASDEQRR) are disordered. Over residues 200 to 212 (RVREHGRPLEHTA) the composition is skewed to basic and acidic residues.

Belongs to the UbiC family.

It localises to the cytoplasm. The catalysed reaction is chorismate = 4-hydroxybenzoate + pyruvate. It functions in the pathway cofactor biosynthesis; ubiquinone biosynthesis. Its function is as follows. Removes the pyruvyl group from chorismate, with concomitant aromatization of the ring, to provide 4-hydroxybenzoate (4HB) for the ubiquinone pathway. In Paraburkholderia xenovorans (strain LB400), this protein is Probable chorismate pyruvate-lyase.